Reading from the N-terminus, the 615-residue chain is Peptidoglycan-binding protein YepA (615 aa).

An N-terminal signal peptide occupies residues 1–26 (MRNLAALLPALFLLGSSLLPAGTALA).

The protein belongs to the bacterial solute-binding protein 5 family. The complex is composed of one ATP-binding protein (YejF), two transmembrane proteins (YejB and YejE) and a solute-binding protein (YepA).

The protein resides in the periplasm. In terms of biological role, part of the ABC transporter complex YejBEF-YepA involved in the uptake of muropeptides, the breakdown products of cell wall peptidoglycan. The import of muropeptides into the cell enables peptidoglycan recycling, which is vital for cell wall integrity in this bacterium. Probably binds muropeptides. This Agrobacterium fabrum (strain C58 / ATCC 33970) (Agrobacterium tumefaciens (strain C58)) protein is Peptidoglycan-binding protein YepA.